The sequence spans 85 residues: UPF0297 protein CD630_12830 (85 aa).

It belongs to the UPF0297 family.

In Clostridioides difficile (strain 630) (Peptoclostridium difficile), this protein is UPF0297 protein CD630_12830.